A 261-amino-acid chain; its full sequence is Aminoglycoside N(3)-acetyltransferase IV (261 aa).

This sequence belongs to the antibiotic N-acetyltransferase family.

The catalysed reaction is a 2-deoxystreptamine antibiotic + acetyl-CoA = an N(3)-acetyl-2-deoxystreptamine antibiotic + CoA + H(+). In terms of biological role, resistance to antibiotics containing the 2-deoxy-streptamine ring including gentamicin, kanamycin, tobramycin, neomycin and apramycin. The protein is Aminoglycoside N(3)-acetyltransferase IV (aacC4) of Salmonella sp.